We begin with the raw amino-acid sequence, 186 residues long: Hydra actinoporin-like toxin 5 (186 aa).

Residues 1 to 20 (MLLYVCLVNLLLQSPSGVDS) form the signal peptide. The Cell attachment site signature appears at 158–160 (RDG).

The protein belongs to the actinoporin family. HALT subfamily. As to quaternary structure, octamer or nonamer in membranes. Monomer in the soluble state. In vitro, interacts with folate receptor alpha (of target organism).

It localises to the nematocyst. The protein resides in the secreted. The protein localises to the target cell membrane. In terms of biological role, pore-forming protein that forms hydrophilic pores and causes cytolysis. Compared to equinatoxin-2 (AC P61914), it reveals lower cytolysis activity (5-12-fold difference, tested on erythrocytes), a larger pore size (probably 2-3 nm) and different affinity to membrane lipids (100-fold lower affinity to sphingomyelin). Binds to sulfatides (SFT) as well as to the two sphingolipids, lysophosphatidic acid (LPA) and sphingosine-1-phosphate (S1P). It seems to bind more strongly to LPA than to S1P and SFT. Shows cytolytic activity on HeLa cells, with a different potency than its paralogs (from most potent to less potent: HALT-4&gt;HALT-6~HALT-1&gt;HALT-3&gt;HALT-7&gt;HALT-2). Pore formation is a multi-step process that involves specific recognition of membrane lipid by a protein aromatic residues rich region, firm binding to the membrane (mainly driven by hydrophobic interactions) accompanied by the transfer of the N-terminal region to the lipid-water interface and finally pore formation after oligomerization of monomers. In vitro, binds to the folate receptor alpha (FOLR1), a GPI-anchored membrane protein that plays a major role in the uptake of folate/folic acid into cells via endocytosis, suggesting a possible involvement of this receptor in the mechanism of HALT-1-induced cell lysis. In vivo, does not cause visible paralysis in larvae of the blowfly Sarcophaga faculata, the most common arthropod prey of Hydra. This chain is Hydra actinoporin-like toxin 5, found in Hydra vulgaris (Hydra).